Reading from the N-terminus, the 537-residue chain is Nedd4 binding protein 3 (537 aa).

The residue at position 172 (S172) is a Phosphoserine. Disordered regions lie at residues L173–C234, R327–A359, and L422–E456. Residues P178–G207 are compositionally biased toward low complexity. The stretch at V295 to E523 forms a coiled coil.

The protein belongs to the N4BP3 family. In terms of assembly, binds NEDD4. Interacts with 14-3-3 proteins. Interacts with MAVS.

It localises to the cytoplasmic vesicle. The protein localises to the cell projection. It is found in the axon. The protein resides in the dendrite. Its function is as follows. Plays a positive role in the antiviral innate immune signaling pathway. Mechanistically, interacts with MAVS and functions as a positive regulator to promote 'Lys-63'-linked polyubiquitination of MAVS and thus strengthens the interaction between MAVS and TRAF2. Also plays a role in axon and dendrite arborization during cranial nerve development. May also be important for neural crest migration and early development of other anterior structures including eye, brain and cranial cartilage. In Rattus norvegicus (Rat), this protein is Nedd4 binding protein 3.